The primary structure comprises 292 residues: Elongation factor Ts (292 aa).

Positions 82 to 85 (TDFV) are involved in Mg(2+) ion dislocation from EF-Tu.

This sequence belongs to the EF-Ts family.

It is found in the cytoplasm. In terms of biological role, associates with the EF-Tu.GDP complex and induces the exchange of GDP to GTP. It remains bound to the aminoacyl-tRNA.EF-Tu.GTP complex up to the GTP hydrolysis stage on the ribosome. This is Elongation factor Ts from Bordetella petrii (strain ATCC BAA-461 / DSM 12804 / CCUG 43448).